The sequence spans 368 residues: Cytochrome b (368 aa).

Helical transmembrane passes span 33 to 53, 77 to 99, 112 to 132, and 178 to 198; these read FGSLLGLCLITQILTGIFLAM, WLIRSIHANSASMFFICIYTHTG, TWMVGVTLLLITILTAFLGYV, and FYALHFLFPFLISALSLMHII. Heme b-binding residues include H83 and H97. Heme b-binding residues include H182 and H196. An a ubiquinone-binding site is contributed by H201. The next 4 membrane-spanning stretches (helical) occupy residues 224-244, 288-308, 323-343, and 345-365; these read FSAKDLIGVILLWIMLGSVVL, LGGVLALIMSIAILYFLPMMN, IAFWLLVTNFIVLMWIGSKPV, and SPFEEIGQIMTVTYFSIYMIM.

Belongs to the cytochrome b family. In terms of assembly, the main subunits of complex b-c1 are: cytochrome b, cytochrome c1 and the Rieske protein. The cofactor is heme b.

The protein resides in the mitochondrion inner membrane. Functionally, component of the ubiquinol-cytochrome c reductase complex (complex III or cytochrome b-c1 complex) that is part of the mitochondrial respiratory chain. The b-c1 complex mediates electron transfer from ubiquinol to cytochrome c. Contributes to the generation of a proton gradient across the mitochondrial membrane that is then used for ATP synthesis. This Bugula neritina (Brown bryozoan) protein is Cytochrome b (mt:Cyt-b).